A 144-amino-acid polypeptide reads, in one-letter code: Protein cornichon homolog 1 (144 aa).

The Cytoplasmic segment spans residues 1-10 (MAFTFAAFCY). Residues 11 to 31 (MLALLLTATLIFFAIWHIIAF) form a helical membrane-spanning segment. Residues 32–56 (DELKTDYKNPIDQCNTLNPLVLPEY) are Lumenal-facing. Residues 57 to 77 (LIHAFFCVMFLCAAEWLTLGL) traverse the membrane as a helical segment. The Cytoplasmic segment spans residues 78–122 (NMPLLAYHIWRYMSRPVMSGPGLYDPTTIMNADILAYCQKEGWCK). The helical transmembrane segment at 123–143 (LAFYLLAFFYYLYGMIYVLVS) threads the bilayer. Ser144 is a topological domain (lumenal).

Belongs to the cornichon family. As to quaternary structure, interacts with AREG immature precursor and with immature TGFA, i.e. with a prosegment and lacking full N-glycosylation, but not with the fully N-glycosylated form. In the Golgi apparatus, may form a complex with GORASP55 and transmembrane TGFA.

The protein localises to the endoplasmic reticulum membrane. The protein resides in the golgi apparatus membrane. Involved in the selective transport and maturation of TGF-alpha family proteins. The chain is Protein cornichon homolog 1 (CNIH1) from Pongo abelii (Sumatran orangutan).